The following is a 614-amino-acid chain: MAKKNIKQKKDNRIAIDVKKHIKKVDVGVFDGTFVFTSPLSISELAPKLNKSPNEIIMRYFKKGVVYNLNTILDEEQIGELCLEYDLDFKIEKNVNTENLLENIYFDDLEIDLVARAPIVTIMGHVDHGKTTLLDTIRKSSITASEAGGITQHIGAYQIIKDNRAITFIDTPGHEAFTEMRARGANLTDIVILVVAADDGIKMQTEEAIDHAKAANVPIIVFVNKMDKYEANPEKVLNQLSAKEIVAEELGGDVVFVKGSALKNEGISELLDSILLIAELNNYKANPNRLAYGTTIEANLDKGHGPLATLLVQNGTLRKGDYLVVGSTYGKIRNMFDEYDNEIEIALPSKPVKVSGFEEVPTAGDKFLALADEKQARAIANDVKQKKMRLERAMLQSSDIRTKIANGELKNINLIIKADVQGSLEALKGIFSSINIEGVTTTLIRSAIGTISESDVRLAQTSDAIIIGFNVRASRIIKDLADSVGVQIMNYDIIYKFKEDLELWMKGTLDPIIIEEVIGEAKVLKLFKHSQVGTICGCRVINGKIKRNALVRVLRDGIVIYNSKIATLQHNKDSVNEVIADKECGLTIANFNDIKENDIIEVYIKVEKKHDEVK.

A tr-type G domain is found at 115–283; it reads ARAPIVTIMG…ILLIAELNNY (169 aa). The G1 stretch occupies residues 124 to 131; it reads GHVDHGKT. 124-131 lines the GTP pocket; the sequence is GHVDHGKT. A G2 region spans residues 149 to 153; that stretch reads GITQH. The interval 170–173 is G3; it reads DTPG. Residues 170–174 and 224–227 contribute to the GTP site; these read DTPGH and NKMD. Residues 224 to 227 form a G4 region; it reads NKMD. A G5 region spans residues 260–262; the sequence is SAL.

The protein belongs to the TRAFAC class translation factor GTPase superfamily. Classic translation factor GTPase family. IF-2 subfamily.

It is found in the cytoplasm. In terms of biological role, one of the essential components for the initiation of protein synthesis. Protects formylmethionyl-tRNA from spontaneous hydrolysis and promotes its binding to the 30S ribosomal subunits. Also involved in the hydrolysis of GTP during the formation of the 70S ribosomal complex. In Ureaplasma parvum serovar 3 (strain ATCC 27815 / 27 / NCTC 11736), this protein is Translation initiation factor IF-2.